The following is a 380-amino-acid chain: Cytochrome b (380 aa).

The next 4 membrane-spanning stretches (helical) occupy residues 33–53 (FGSLLGLCLIIQILTGLFLAM), 77–98 (WLIRYMHANGASMFFICLFLHV), 113–133 (WNMGIILLFAVMATAFMGYVL), and 178–198 (FFAFHFILPFIITALVLVHLL). Heme b contacts are provided by His83 and His97. 2 residues coordinate heme b: His182 and His196. His201 lines the a ubiquinone pocket. Transmembrane regions (helical) follow at residues 226–246 (IKDFLGVLVLLMAFMILVLFF), 288–308 (LGGVLALILSILILALMPLLH), 320–340 (ITQTMYWILVADLLILTWIGG), and 347–367 (FIMIGQAASIAYFAIIVIFMP).

The protein belongs to the cytochrome b family. As to quaternary structure, the cytochrome bc1 complex contains 11 subunits: 3 respiratory subunits (MT-CYB, CYC1 and UQCRFS1), 2 core proteins (UQCRC1 and UQCRC2) and 6 low-molecular weight proteins (UQCRH/QCR6, UQCRB/QCR7, UQCRQ/QCR8, UQCR10/QCR9, UQCR11/QCR10 and a cleavage product of UQCRFS1). This cytochrome bc1 complex then forms a dimer. Heme b is required as a cofactor.

It is found in the mitochondrion inner membrane. Component of the ubiquinol-cytochrome c reductase complex (complex III or cytochrome b-c1 complex) that is part of the mitochondrial respiratory chain. The b-c1 complex mediates electron transfer from ubiquinol to cytochrome c. Contributes to the generation of a proton gradient across the mitochondrial membrane that is then used for ATP synthesis. The sequence is that of Cytochrome b (MT-CYB) from Chionomys roberti (Robert's snow vole).